The primary structure comprises 121 residues: Large ribosomal subunit protein uL18 (121 aa).

It belongs to the universal ribosomal protein uL18 family. In terms of assembly, part of the 50S ribosomal subunit; part of the 5S rRNA/L5/L18/L25 subcomplex. Contacts the 5S and 23S rRNAs.

In terms of biological role, this is one of the proteins that bind and probably mediate the attachment of the 5S RNA into the large ribosomal subunit, where it forms part of the central protuberance. The chain is Large ribosomal subunit protein uL18 from Polaromonas sp. (strain JS666 / ATCC BAA-500).